We begin with the raw amino-acid sequence, 317 residues long: Mitochondrial thiamine pyrophosphate carrier 1 (317 aa).

3 Solcar repeats span residues Gly12 to Val110, Pro120 to Val206, and Pro214 to Leu309. 6 helical membrane-spanning segments follow: residues Val17 to Leu35, Leu91 to Thr107, Phe126 to Leu146, Gly181 to Ala198, Ala220 to Val240, and Gly284 to Trp301.

It belongs to the mitochondrial carrier (TC 2.A.29) family.

The protein resides in the mitochondrion inner membrane. Mitochondrial transporter that mediates uptake of thiamine pyrophosphate (ThPP) into mitochondria. The polypeptide is Mitochondrial thiamine pyrophosphate carrier 1 (tpc1) (Neosartorya fischeri (strain ATCC 1020 / DSM 3700 / CBS 544.65 / FGSC A1164 / JCM 1740 / NRRL 181 / WB 181) (Aspergillus fischerianus)).